The following is a 453-amino-acid chain: Bifunctional protein GlmU (453 aa).

The interval 1 to 231 (MERTCLAVIL…EIEMTGCNNR (231 aa)) is pyrophosphorylase. UDP-N-acetyl-alpha-D-glucosamine is bound by residues 10 to 13 (LAAG), K24, Q77, 82 to 83 (GT), 105 to 107 (YGD), G143, E157, N172, and N229. Residue D107 participates in Mg(2+) binding. A Mg(2+)-binding site is contributed by N229. The segment at 232–252 (AELAVIERFWQERRRREMMLA) is linker. The segment at 253 to 453 (GVTMIAPETV…AIKAAKKAEA (201 aa)) is N-acetyltransferase. 2 residues coordinate UDP-N-acetyl-alpha-D-glucosamine: R318 and K336. H348 serves as the catalytic Proton acceptor. UDP-N-acetyl-alpha-D-glucosamine contacts are provided by Y351 and N362. Acetyl-CoA is bound by residues A365, 371–372 (NY), S390, S408, and R425.

This sequence in the N-terminal section; belongs to the N-acetylglucosamine-1-phosphate uridyltransferase family. The protein in the C-terminal section; belongs to the transferase hexapeptide repeat family. As to quaternary structure, homotrimer. Mg(2+) serves as cofactor.

Its subcellular location is the cytoplasm. The catalysed reaction is alpha-D-glucosamine 1-phosphate + acetyl-CoA = N-acetyl-alpha-D-glucosamine 1-phosphate + CoA + H(+). The enzyme catalyses N-acetyl-alpha-D-glucosamine 1-phosphate + UTP + H(+) = UDP-N-acetyl-alpha-D-glucosamine + diphosphate. Its pathway is nucleotide-sugar biosynthesis; UDP-N-acetyl-alpha-D-glucosamine biosynthesis; N-acetyl-alpha-D-glucosamine 1-phosphate from alpha-D-glucosamine 6-phosphate (route II): step 2/2. The protein operates within nucleotide-sugar biosynthesis; UDP-N-acetyl-alpha-D-glucosamine biosynthesis; UDP-N-acetyl-alpha-D-glucosamine from N-acetyl-alpha-D-glucosamine 1-phosphate: step 1/1. It functions in the pathway bacterial outer membrane biogenesis; LPS lipid A biosynthesis. Catalyzes the last two sequential reactions in the de novo biosynthetic pathway for UDP-N-acetylglucosamine (UDP-GlcNAc). The C-terminal domain catalyzes the transfer of acetyl group from acetyl coenzyme A to glucosamine-1-phosphate (GlcN-1-P) to produce N-acetylglucosamine-1-phosphate (GlcNAc-1-P), which is converted into UDP-GlcNAc by the transfer of uridine 5-monophosphate (from uridine 5-triphosphate), a reaction catalyzed by the N-terminal domain. This is Bifunctional protein GlmU from Rhizobium etli (strain ATCC 51251 / DSM 11541 / JCM 21823 / NBRC 15573 / CFN 42).